A 366-amino-acid polypeptide reads, in one-letter code: Cobalt-precorrin-5B C(1)-methyltransferase (366 aa).

Belongs to the CbiD family.

It catalyses the reaction Co-precorrin-5B + S-adenosyl-L-methionine = Co-precorrin-6A + S-adenosyl-L-homocysteine. Its pathway is cofactor biosynthesis; adenosylcobalamin biosynthesis; cob(II)yrinate a,c-diamide from sirohydrochlorin (anaerobic route): step 6/10. Its function is as follows. Catalyzes the methylation of C-1 in cobalt-precorrin-5B to form cobalt-precorrin-6A. This Paraburkholderia phymatum (strain DSM 17167 / CIP 108236 / LMG 21445 / STM815) (Burkholderia phymatum) protein is Cobalt-precorrin-5B C(1)-methyltransferase.